A 103-amino-acid polypeptide reads, in one-letter code: Large ribosomal subunit protein uL24 (103 aa).

This sequence belongs to the universal ribosomal protein uL24 family. Part of the 50S ribosomal subunit.

One of two assembly initiator proteins, it binds directly to the 5'-end of the 23S rRNA, where it nucleates assembly of the 50S subunit. Functionally, one of the proteins that surrounds the polypeptide exit tunnel on the outside of the subunit. This chain is Large ribosomal subunit protein uL24, found in Lachnospira eligens (strain ATCC 27750 / DSM 3376 / VPI C15-48 / C15-B4) (Eubacterium eligens).